Here is a 332-residue protein sequence, read N- to C-terminus: L-lactate dehydrogenase A chain (332 aa).

At alanine 2 the chain carries N-acetylalanine. N6-acetyllysine; alternate is present on lysine 5. Lysine 5 carries the N6-succinyllysine; alternate modification. Position 14 is an N6-acetyllysine (lysine 14). NAD(+) is bound at residue 29 to 57 (GAVGMACAISILMKDLADEVALVDVMEDK). Lysine 57 is modified (N6-acetyllysine; alternate). Lysine 57 participates in a covalent cross-link: Glycyl lysine isopeptide (Lys-Gly) (interchain with G-Cter in SUMO2); alternate. Lysine 81 is subject to N6-acetyllysine. Arginine 106 contributes to the substrate binding site. Lysine 118 bears the N6-acetyllysine; alternate mark. An N6-succinyllysine; alternate modification is found at lysine 118. Lysine 126 carries the post-translational modification N6-acetyllysine. Asparagine 138 contacts NAD(+). The substrate site is built by asparagine 138 and arginine 169. The active-site Proton acceptor is histidine 193. 2 positions are modified to N6-acetyllysine: lysine 224 and lysine 232. Phosphotyrosine is present on tyrosine 239. Lysine 243 bears the N6-acetyllysine mark. Threonine 248 serves as a coordination point for substrate. A Phosphothreonine modification is found at threonine 309. Lysine 318 carries the N6-acetyllysine; alternate modification. An N6-succinyllysine; alternate modification is found at lysine 318. Threonine 322 carries the post-translational modification Phosphothreonine.

Belongs to the LDH/MDH superfamily. LDH family. In terms of assembly, homotetramer. Interacts with PTEN upstream reading frame protein MP31. ISGylated.

Its subcellular location is the cytoplasm. The catalysed reaction is (S)-lactate + NAD(+) = pyruvate + NADH + H(+). Its pathway is fermentation; pyruvate fermentation to lactate; (S)-lactate from pyruvate: step 1/1. Its function is as follows. Interconverts simultaneously and stereospecifically pyruvate and lactate with concomitant interconversion of NADH and NAD(+). The sequence is that of L-lactate dehydrogenase A chain (LDHA) from Bos taurus (Bovine).